The primary structure comprises 489 residues: uncharacterized protein (489 aa).

The next 13 helical transmembrane spans lie at 1 to 21, 40 to 60, 74 to 94, 117 to 137, 158 to 178, 188 to 208, 234 to 254, 271 to 291, 318 to 338, 362 to 382, 388 to 408, 422 to 442, and 456 to 476; these read MNAALIIIFGVLLLSIFLGIR, FGTVFVFLLMAGEIYTTFTFL, FYIIAYGCLAYILSYWLLPAV, PLLGILVSLVGIAALIPYLVL, AAIWIGAVSITVYVMVSGIHG, IMILVVVLFLGVYLPIHYYGG, AWFSSTVLLTALGFYMWPHTF, IIMPLYQLVLLFVLFVGFAAI, FVGIIGAAGLLTALVPGSMIL, VSALAKFLVPVIALISVYFTF, IVTLLLMGYSLVTQLFPALLF, FAGIIAGVGAVTYITMTETTI, and LNVGIVALLLNITVMMAVSLM.

This sequence belongs to the sodium:solute symporter (SSF) (TC 2.A.21) family.

It localises to the cell membrane. This is an uncharacterized protein from Bacillus subtilis (strain 168).